We begin with the raw amino-acid sequence, 331 residues long: uncharacterized protein (331 aa).

7 Pentapeptide repeat domains span residues 20 to 59 (LKLPGINLEAADLIGIVLNEADLRGANLLFCYLNRANLGQ), 60 to 99 (ANLVAANLSGASLNQADLAGADLRSANFHGAMLQGAILRD), 100 to 139 (SDMTLATLQDTNLIGADLRGADLSGATLTGACLRGANMRQ), 151 to 190 (AILGRADLQGANMKGVDLSRADLSYANLKEANLRDVDLRK), 191 to 230 (ADLSYANLKGALLTDANLSGAKLNGADLQNANLMRAKISE), 231 to 270 (AEMTAVNCQGAIMTHVNLNRTNLTGSNLSFTRMNSADLSR), and 271 to 310 (ANLTKANLQEAELIEAFFARANLTEANFINANLVRADLMS).

This is an uncharacterized protein from Synechocystis sp. (strain ATCC 27184 / PCC 6803 / Kazusa).